The following is an 81-amino-acid chain: Acyl carrier protein (81 aa).

Residues 1 to 79 (MDREEILQKI…EAVDYVVEHQ (79 aa)) form the Carrier domain. At Ser-39 the chain carries O-(pantetheine 4'-phosphoryl)serine.

The protein belongs to the acyl carrier protein (ACP) family. In terms of processing, 4'-phosphopantetheine is transferred from CoA to a specific serine of apo-ACP by AcpS. This modification is essential for activity because fatty acids are bound in thioester linkage to the sulfhydryl of the prosthetic group.

Its subcellular location is the cytoplasm. The protein operates within lipid metabolism; fatty acid biosynthesis. In terms of biological role, carrier of the growing fatty acid chain in fatty acid biosynthesis. The protein is Acyl carrier protein of Rubrobacter xylanophilus (strain DSM 9941 / JCM 11954 / NBRC 16129 / PRD-1).